The primary structure comprises 262 residues: 1,2-epoxyphenylacetyl-CoA isomerase (262 aa).

Belongs to the enoyl-CoA hydratase/isomerase family.

The enzyme catalyses 2-(1,2-epoxy-1,2-dihydrophenyl)acetyl-CoA = 2-oxepin-2(3H)-ylideneacetyl-CoA. It functions in the pathway aromatic compound metabolism; phenylacetate degradation. In terms of biological role, catalyzes the reversible conversion of the epoxide to 2-oxepin-2(3H)-ylideneacetyl-CoA (oxepin-CoA). The sequence is that of 1,2-epoxyphenylacetyl-CoA isomerase (paaG) from Escherichia coli (strain K12).